A 700-amino-acid chain; its full sequence is E3 ubiquitin-protein ligase SspH1 (700 aa).

The interval 1–395 (MFNIRNTQPS…HSGIRIHFDM (395 aa)) is interaction with target proteins. 8 LRR repeats span residues 217–238 (HITT…PEGL), 239–257 (RELE…SLPQ), 258–279 (GLQK…PPGL), 280–297 (GDLA…EMPP), 298–319 (ALRE…PSGL), 320–337 (QKLW…EMSP), 338–360 (GLQE…TGLS), and 361–381 (SAAR…QALR). Residues 396 to 403 (AGPSVPRE) form a linker region. An E3 ubiquitin-protein ligase catalytic domain region spans residues 404–700 (ARALHLAVAD…SYLTARWRLN (297 aa)). An NEL domain is found at 406-700 (ALHLAVADWL…SYLTARWRLN (295 aa)). Cys-492 acts as the Glycyl thioester intermediate in catalysis.

This sequence belongs to the LRR-containing bacterial E3 ligase family. As to quaternary structure, interacts (via leucine-rich repeat region) with host PKN1 (via the second REM repeat). Ubiquitinated in the presence of host E1 ubiquitin-activating enzyme, E2 ubiquitin-conjugating enzyme and ubiquitin.

The protein resides in the secreted. It localises to the host cytoplasm. Its subcellular location is the host nucleus. It carries out the reaction S-ubiquitinyl-[E2 ubiquitin-conjugating enzyme]-L-cysteine + [acceptor protein]-L-lysine = [E2 ubiquitin-conjugating enzyme]-L-cysteine + N(6)-ubiquitinyl-[acceptor protein]-L-lysine.. Exists in an autoinhibited state in the absence of substrate protein, due to interactions of the leucine-rich repeat domain with the catalytic domain. Is activated upon binding to a substrate protein. Effector proteins function to alter host cell physiology and promote bacterial survival in host tissues. This protein is an E3 ubiquitin-protein ligase that interferes with the host's ubiquitination pathway and targets host proteins for proteasomal degradation. Can ubiquitinate ubiquitin, giving rise to polyubiquitin chains (in vitro). Polyubiquitinates host PKN1, leading to its proteasomal degradation. Down-modulates production of host pro-inflammatory cytokines by inhibiting NF-kappa-B-dependent gene expression; this depends only partially on its E3 ubiquitin-protein ligase activity. The polypeptide is E3 ubiquitin-protein ligase SspH1 (sspH1) (Salmonella typhimurium (strain 14028s / SGSC 2262)).